A 497-amino-acid polypeptide reads, in one-letter code: Reticulophagy regulator 1 (497 aa).

Residues 1–51 form a disordered region; that stretch reads MASPAPPEHAEEGCPAPAAEEQAPPSPPPPQASPAERQQQEEEAQEAGAAE. The Cytoplasmic portion of the chain corresponds to 1 to 59; sequence MASPAPPEHAEEGCPAPAAEEQAPPSPPPPQASPAERQQQEEEAQEAGAAEGAGLQVEE. The span at 13-23 shows a compositional bias: low complexity; that stretch reads GCPAPAAEEQA. Residues 60–80 traverse the membrane as a helical segment; that stretch reads AAGRAAAAVTWLLGEPVLWLG. Residues 81 to 95 are Lumenal-facing; it reads CRADELLSWKRPLRS. The segment at 84–233 is reticulon homology domain; sequence DELLSWKRPL…LLCAFLCPLF (150 aa). A helical transmembrane segment spans residues 96-116; it reads LLGFVAANLLFWFLALTPWRV. Residues 117 to 118 are Cytoplasmic-facing; the sequence is YH. Residues 119 to 139 form a helical membrane-spanning segment; sequence LISVMILGRVIMQIIKDMVLS. At 140–208 the chain is on the lumenal side; it reads RTRGAQLWRS…LVCSVCTFFT (69 aa). Ser149 is subject to Phosphoserine. Ser151 is modified (phosphoserine; by CAMK2B). At Ser153 the chain carries Phosphoserine. Residues 209 to 229 form a helical membrane-spanning segment; that stretch reads ILGSYIPGVILSYLLLLCAFL. Residues 230–497 are Cytoplasmic-facing; that stretch reads CPLFKCNDIG…GFLSNLLGGH (268 aa). Residues 319–330 are compositionally biased toward polar residues; sequence FNLSEGYTPQTD. Disordered stretches follow at residues 319 to 365, 377 to 396, 436 to 455, and 468 to 497; these read FNLS…EDEL, KEQL…AAGL, LSQA…GDDF, and SELG…LGGH. Basic and acidic residues-rich tracts occupy residues 334–348 and 377–388; these read DLDR…RDLS and KEQLDSGHRPSK. A compositionally biased stretch (acidic residues) spans 443 to 455; sequence PEEDTDTEEGDDF. Positions 453–458 match the LIR motif motif; sequence DDFELL. Positions 471 to 490 are enriched in polar residues; that stretch reads GLTQDQEAEAQQNKKSSGFL.

The protein belongs to the RETREG family. Homooligomer; oligomerization is enhanced following endoplasmic reticulum stress and is mediated by the reticulon homology domain. Interacts with ATG8 family modifier proteins MAP1LC3A, MAP1LC3B, MAP1LC3C, GABARAP, GABARAPL1 and GABARAPL2. Shows higher affinity for GABARAPL1 than for MAP1LC3A or MAP1LC3B. Post-translationally, phosphorylation at Ser-151 by CAMK2B enhances oligomerization and membrane scission and reticulophagy activity. In terms of tissue distribution, overexpressed in esophageal squamous cell carcinoma.

The protein resides in the golgi apparatus. The protein localises to the cis-Golgi network membrane. Its subcellular location is the endoplasmic reticulum membrane. In terms of biological role, endoplasmic reticulum (ER)-anchored autophagy regulator which mediates ER delivery into lysosomes through sequestration into autophagosomes. Promotes membrane remodeling and ER scission via its membrane bending capacity and targets the fragments into autophagosomes via interaction with ATG8 family proteins. Active under basal conditions. Required for collagen quality control in a LIR motif-dependent manner. Required for long-term survival of nociceptive and autonomic ganglion neurons. Functionally, (Microbial infection) During SARS-CoV-2 infection, RETREG1-mediated reticulophagy is promoted by SARS-CoV-2 ORF3A protein. This induces endoplasmic reticulum stress and inflammatory responses and facilitates viral infection. This Homo sapiens (Human) protein is Reticulophagy regulator 1.